Consider the following 137-residue polypeptide: Global transcriptional regulator Spx (137 aa).

A disulfide bond links cysteine 10 and cysteine 13.

The protein belongs to the ArsC family. Spx subfamily. As to quaternary structure, interacts with the C-terminal domain of the alpha subunit of the RNAP.

It is found in the cytoplasm. Its function is as follows. Global transcriptional regulator that plays a key role in stress response and exerts either positive or negative regulation of genes. Acts by interacting with the C-terminal domain of the alpha subunit of the RNA polymerase (RNAP). This interaction can enhance binding of RNAP to the promoter region of target genes and stimulate their transcription, or block interaction of RNAP with activator. This is Global transcriptional regulator Spx from Streptococcus agalactiae serotype III (strain NEM316).